The primary structure comprises 305 residues: Oxygen-dependent coproporphyrinogen-III oxidase (305 aa).

Residue serine 93 coordinates substrate. A divalent metal cation contacts are provided by histidine 97 and histidine 107. The Proton donor role is filled by histidine 107. 109–111 (NVR) provides a ligand contact to substrate. Positions 146 and 176 each coordinate a divalent metal cation. Positions 241 to 276 (YVEFNLVYDRGTLFGLQSGGRTESILMSLPPQVRWG) are important for dimerization. 259-261 (GGR) contributes to the substrate binding site.

Belongs to the aerobic coproporphyrinogen-III oxidase family. As to quaternary structure, homodimer. The cofactor is a divalent metal cation.

It localises to the cytoplasm. The enzyme catalyses coproporphyrinogen III + O2 + 2 H(+) = protoporphyrinogen IX + 2 CO2 + 2 H2O. Its pathway is porphyrin-containing compound metabolism; protoporphyrin-IX biosynthesis; protoporphyrinogen-IX from coproporphyrinogen-III (O2 route): step 1/1. In terms of biological role, involved in the heme biosynthesis. Catalyzes the aerobic oxidative decarboxylation of propionate groups of rings A and B of coproporphyrinogen-III to yield the vinyl groups in protoporphyrinogen-IX. In Pseudomonas fluorescens (strain ATCC BAA-477 / NRRL B-23932 / Pf-5), this protein is Oxygen-dependent coproporphyrinogen-III oxidase.